The following is a 204-amino-acid chain: MTVRTDQLIAAPVARLIEEFAKLPGIGPKTASRLTFYLLRAEPKQALALAQAILDVKEQVGYCRRCFNITVGELCAICLDPSRDQTKICVVEEPLDVLAIERTGAYRGLYHVLHGHIAPLEGIYREDLKIEELLARVRSEPVQEVILATNPNTEGEATAFLLLRDLAPLGVRVTRPARGLPTGGDLEWADPETLGSAFEGRREL.

The C4-type zinc-finger motif lies at 63 to 78 (CRRCFNITVGELCAIC). The 96-residue stretch at 86–181 (TKICVVEEPL…RVTRPARGLP (96 aa)) folds into the Toprim domain.

It belongs to the RecR family.

Its function is as follows. May play a role in DNA repair. It seems to be involved in an RecBC-independent recombinational process of DNA repair. It may act with RecF and RecO. This chain is Recombination protein RecR, found in Chloroflexus aurantiacus (strain ATCC 29366 / DSM 635 / J-10-fl).